A 1026-amino-acid chain; its full sequence is Isoleucine--tRNA ligase (1026 aa).

Positions Pro-51 to His-61 match the 'HIGH' region motif. The 'KMSKS' region signature appears at Lys-591–Ser-595. An ATP-binding site is contributed by Lys-594.

Belongs to the class-I aminoacyl-tRNA synthetase family. IleS type 2 subfamily. As to quaternary structure, monomer. Zn(2+) is required as a cofactor.

It is found in the cytoplasm. The enzyme catalyses tRNA(Ile) + L-isoleucine + ATP = L-isoleucyl-tRNA(Ile) + AMP + diphosphate. In terms of biological role, catalyzes the attachment of isoleucine to tRNA(Ile). As IleRS can inadvertently accommodate and process structurally similar amino acids such as valine, to avoid such errors it has two additional distinct tRNA(Ile)-dependent editing activities. One activity is designated as 'pretransfer' editing and involves the hydrolysis of activated Val-AMP. The other activity is designated 'posttransfer' editing and involves deacylation of mischarged Val-tRNA(Ile). The polypeptide is Isoleucine--tRNA ligase (Thermoplasma acidophilum (strain ATCC 25905 / DSM 1728 / JCM 9062 / NBRC 15155 / AMRC-C165)).